Here is a 430-residue protein sequence, read N- to C-terminus: Asparagine--tRNA ligase (430 aa).

The protein belongs to the class-II aminoacyl-tRNA synthetase family. In terms of assembly, homodimer.

The protein localises to the cytoplasm. The catalysed reaction is tRNA(Asn) + L-asparagine + ATP = L-asparaginyl-tRNA(Asn) + AMP + diphosphate + H(+). The protein is Asparagine--tRNA ligase of Oceanobacillus iheyensis (strain DSM 14371 / CIP 107618 / JCM 11309 / KCTC 3954 / HTE831).